Reading from the N-terminus, the 75-residue chain is Large ribosomal subunit protein bL31 (75 aa).

The protein belongs to the bacterial ribosomal protein bL31 family. Type A subfamily. Part of the 50S ribosomal subunit.

Its function is as follows. Binds the 23S rRNA. The polypeptide is Large ribosomal subunit protein bL31 (Chlorobium luteolum (strain DSM 273 / BCRC 81028 / 2530) (Pelodictyon luteolum)).